Consider the following 357-residue polypeptide: UDP-N-acetylglucosamine--N-acetylmuramyl-(pentapeptide) pyrophosphoryl-undecaprenol N-acetylglucosamine transferase (357 aa).

UDP-N-acetyl-alpha-D-glucosamine contacts are provided by residues 13 to 15, Asn-125, Arg-161, Ser-189, Ile-243, and Gln-288; that span reads TGG.

This sequence belongs to the glycosyltransferase 28 family. MurG subfamily.

It localises to the cell inner membrane. It carries out the reaction di-trans,octa-cis-undecaprenyl diphospho-N-acetyl-alpha-D-muramoyl-L-alanyl-D-glutamyl-meso-2,6-diaminopimeloyl-D-alanyl-D-alanine + UDP-N-acetyl-alpha-D-glucosamine = di-trans,octa-cis-undecaprenyl diphospho-[N-acetyl-alpha-D-glucosaminyl-(1-&gt;4)]-N-acetyl-alpha-D-muramoyl-L-alanyl-D-glutamyl-meso-2,6-diaminopimeloyl-D-alanyl-D-alanine + UDP + H(+). Its pathway is cell wall biogenesis; peptidoglycan biosynthesis. Functionally, cell wall formation. Catalyzes the transfer of a GlcNAc subunit on undecaprenyl-pyrophosphoryl-MurNAc-pentapeptide (lipid intermediate I) to form undecaprenyl-pyrophosphoryl-MurNAc-(pentapeptide)GlcNAc (lipid intermediate II). This is UDP-N-acetylglucosamine--N-acetylmuramyl-(pentapeptide) pyrophosphoryl-undecaprenol N-acetylglucosamine transferase from Bordetella petrii (strain ATCC BAA-461 / DSM 12804 / CCUG 43448).